A 386-amino-acid chain; its full sequence is MATTKSFLILFFMILATTSSTCAKLEEMVTVLSIDGGGIKGIIPAIILEFLEGQLQEVDNNKDARLADYFDVIGGTSTGGLLTAMITTPNENNRPFAAAKDIVPFYFEHGPHIFNYSGSIFGPRYDGKYLLQVLQEKLGETRVHQALTEVAISSFDIKTNKPVIFTKSNLAKSPELDAKMYDICYSTAAAPIYFPPHHFVTHTSNGATYEFNLVDGGVATVGDPALLSLSVATRLAQEDPAFSSIKSLDYKQMLLLSLGTGTNSEFDKTYTAEEAAKWGPLRWMLAIQQMTNAASSYMTDYYISTVFQARHSQNNYLRVQENALTGTTTEMDDASEANMELLVQVGETLLKKPVSKDSPETYEEALKRFAKLLSDRKKLRANKASY.

The signal sequence occupies residues 1-23; the sequence is MATTKSFLILFFMILATTSSTCA. In terms of domain architecture, PNPLA spans 32 to 229; that stretch reads LSIDGGGIKG…TVGDPALLSL (198 aa). The GXGXXG signature appears at 36 to 41; sequence GGGIKG. A GXSXG motif is present at residues 75–79; sequence GTSTG. The active-site Nucleophile is the serine 77. Asparagine 115 carries N-linked (GlcNAc...) asparagine glycosylation. Residue aspartate 215 is the Proton acceptor of the active site. The DGA/G signature appears at 215–217; it reads DGG. A coiled-coil region spans residues 321-384; sequence ENALTGTTTE…DRKKLRANKA (64 aa).

The protein belongs to the patatin family. Tuber.

Its subcellular location is the vacuole. Its function is as follows. Probable lipolytic acyl hydrolase (LAH), an activity which is thought to be involved in the response of tubers to pathogens. This Solanum tuberosum (Potato) protein is Patatin-15.